Here is a 123-residue protein sequence, read N- to C-terminus: Integration host factor subunit alpha (123 aa).

Belongs to the bacterial histone-like protein family. Heterodimer of an alpha and a beta chain.

This protein is one of the two subunits of integration host factor, a specific DNA-binding protein that functions in genetic recombination as well as in transcriptional and translational control. The polypeptide is Integration host factor subunit alpha (Polaromonas naphthalenivorans (strain CJ2)).